We begin with the raw amino-acid sequence, 353 residues long: Protein-arginine kinase (353 aa).

The Phosphagen kinase C-terminal domain occupies 24–256 (IVLSSRIRLA…RTVIDTEEQA (233 aa)). Residues 27-31 (SSRIR), His93, Arg127, 178-182 (RASVM), and 209-214 (RGLYGE) each bind ATP. The RDXXRA motif of the pArg binding pocket involved in allosteric regulation motif lies at 339–344 (RDVRRA).

Belongs to the ATP:guanido phosphotransferase family.

It catalyses the reaction L-arginyl-[protein] + ATP = N(omega)-phospho-L-arginyl-[protein] + ADP + H(+). Appears to be allosterically activated by the binding of pArg-containing polypeptides to the pArg-binding pocket localized in the C-terminal domain of McsB. Functionally, catalyzes the specific phosphorylation of arginine residues in proteins. The chain is Protein-arginine kinase from Symbiobacterium thermophilum (strain DSM 24528 / JCM 14929 / IAM 14863 / T).